The chain runs to 832 residues: Prickle-like protein 1-B (832 aa).

Residues 14 to 122 (FGCQRSSTSD…NIKMLSRAVM (109 aa)) enclose the PET domain. LIM zinc-binding domains are found at residues 124–188 (AMCE…ELLK), 189–249 (PRCS…HYAE), and 250–313 (YCES…EDVH). Disordered regions lie at residues 312 to 346 (VHAS…ADQC), 428 to 455 (QQPS…QRNN), 602 to 701 (ICQE…KERN), and 766 to 832 (CSSS…CIIS). Basic and acidic residues-rich tracts occupy residues 432 to 453 (EDNR…DLQR) and 603 to 614 (CQEKPPPEEKPM). Composition is skewed to basic residues over residues 669–680 (RPHHHRRRKSRK) and 816–832 (TKSK…CIIS). C829 bears the Cysteine methyl ester mark. C829 is lipidated: S-farnesyl cysteine. A propeptide spans 830–832 (IIS) (removed in mature form).

The protein belongs to the prickle / espinas / testin family. As to quaternary structure, interacts with dvl2/dsh and mapk8/jnk1. In terms of tissue distribution, expressed in the dorsal marginal zone of early gastrulae (stage 10). As gastrulation proceeds, expression expands to include the lateral and ventral marginal zones, excluding the few rows of cells above the blastopore lip. Expression moves dorsally with gastrulation cell movements, and by the end of gastrulation expression is seen in dorsal mesoderm and posterior but not anterior neural ectoderm. Expression becomes down-regulated in mesoderm but remains strong in posterior ectoderm through the neurula stages. During tailbud stages, expressed in the pronephric duct, tailbud, tailtip and forming somites. In the most posterior regions, expressed in notochord and in the floorplate of the neural tube with weak expression in the roofplate. At stage 30, expressed in a complex pattern in the head including strong expression in the lens and otic vesicle.

It localises to the cell membrane. Its function is as follows. Acts in a planar cell polarity (PCP) complex; polarization along the apical/basal axis of epithelial cells. Regulates the polarized assembly of fibronectrin on the surface of the mesoderm during gastrulation. Essential for gastrulation cell movements, cooperating with dvl2/dsh to activate jnk. Acts together with tes to control axial elongation. The chain is Prickle-like protein 1-B (prickle1-b) from Xenopus laevis (African clawed frog).